We begin with the raw amino-acid sequence, 158 residues long: Protein Smg homolog (158 aa).

Belongs to the Smg family.

The sequence is that of Protein Smg homolog from Pseudoalteromonas atlantica (strain T6c / ATCC BAA-1087).